Consider the following 532-residue polypeptide: Amidophosphoribosyltransferase 3, chloroplastic (532 aa).

The N-terminal 59 residues, 1 to 59 (MAFSVEEISSILPNSLSANPRNVSQNTISPSFFKPSLKPYASKTLISLSCRRSLSPVFS), are a transit peptide targeting the chloroplast. The Nucleophile role is filled by Cys-77. Positions 77 to 296 (CGVVGIHGDP…PGEIVVVDRN (220 aa)) constitute a Glutamine amidotransferase type-2 domain. [4Fe-4S] cluster is bound by residues Cys-313, Cys-459, Cys-511, and Cys-514.

It in the C-terminal section; belongs to the purine/pyrimidine phosphoribosyltransferase family. The cofactor is [4Fe-4S] cluster. Mg(2+) is required as a cofactor. In terms of tissue distribution, mostly expressed at low levels in leaves, and, to a lower extent, in cotyledons.

Its subcellular location is the plastid. The protein localises to the chloroplast stroma. The catalysed reaction is 5-phospho-beta-D-ribosylamine + L-glutamate + diphosphate = 5-phospho-alpha-D-ribose 1-diphosphate + L-glutamine + H2O. It participates in purine metabolism; IMP biosynthesis via de novo pathway; N(1)-(5-phospho-D-ribosyl)glycinamide from 5-phospho-alpha-D-ribose 1-diphosphate: step 1/2. With respect to regulation, inhibited by the phenyltriazole acetic acid compound [5-(4-chlorophenyl)-1-isopropyl-1H-[1,2,4]triazol-3-yl]-acetic acid (DAS734), a bleaching herbicide. Repressed by AMP, ADP, ATP and GTP, and slightly by GMP. Functionally, catalyzes the first committed step of 'de novo' purine biosynthesis from glutamine. The sequence is that of Amidophosphoribosyltransferase 3, chloroplastic (ASE3) from Arabidopsis thaliana (Mouse-ear cress).